We begin with the raw amino-acid sequence, 417 residues long: Glucose-1-phosphatase (417 aa).

Residues 1 to 23 (MKYKVLTLCLSAALFAPIAPTMA) form the signal peptide. Arginine 41 is a substrate binding site. Histidine 42 serves as the catalytic Nucleophile. Residues arginine 45, arginine 118, and glutamate 220 each contribute to the substrate site. Residue aspartate 315 is the Proton donor of the active site.

The protein belongs to the histidine acid phosphatase family. Homodimer.

It is found in the periplasm. It catalyses the reaction alpha-D-glucose 1-phosphate + H2O = D-glucose + phosphate. This chain is Glucose-1-phosphatase (agp), found in Providencia rettgeri.